The following is a 365-amino-acid chain: Chorismate synthase (365 aa).

The NADP(+) site is built by Arg-48 and Arg-54. FMN is bound by residues 125 to 127 (RSS), 238 to 239 (NA), Gly-278, 293 to 297 (KPTSS), and Arg-319.

This sequence belongs to the chorismate synthase family. Homotetramer. It depends on FMNH2 as a cofactor.

The catalysed reaction is 5-O-(1-carboxyvinyl)-3-phosphoshikimate = chorismate + phosphate. The protein operates within metabolic intermediate biosynthesis; chorismate biosynthesis; chorismate from D-erythrose 4-phosphate and phosphoenolpyruvate: step 7/7. Functionally, catalyzes the anti-1,4-elimination of the C-3 phosphate and the C-6 proR hydrogen from 5-enolpyruvylshikimate-3-phosphate (EPSP) to yield chorismate, which is the branch point compound that serves as the starting substrate for the three terminal pathways of aromatic amino acid biosynthesis. This reaction introduces a second double bond into the aromatic ring system. The sequence is that of Chorismate synthase from Janthinobacterium sp. (strain Marseille) (Minibacterium massiliensis).